A 314-amino-acid chain; its full sequence is MANLKRIRDRIKAVKNTRKITEAMRLVAAARVRRAQEQVMATRPFADRLAQVFYRLQTRLRLEDVDLPLLKQRPIETVGLLVVAGDRGLCGAYNANVIKRTEERVRELQETGQQVRLYLVGRKAVQYFQRRSAPIAKTYVNLSQIPTAAEAAQIGDELLSAFLSEKVDKVELIYTRFVSLISSRPVVQSLLPLDPTRLAARDDEIFNLLVRGGEFTVERSKIVAAVSAPPPDMIFEQDPVQILDALLPLYLNNQLLRALQEAAASELAARMTAMSNASDNATELIRTLGLAYNKARQAAITQEILEVVAGAEAL.

This sequence belongs to the ATPase gamma chain family. In terms of assembly, F-type ATPases have 2 components, CF(1) - the catalytic core - and CF(0) - the membrane proton channel. CF(1) has five subunits: alpha(3), beta(3), gamma(1), delta(1), epsilon(1). CF(0) has three main subunits: a, b and c.

It is found in the cellular thylakoid membrane. Produces ATP from ADP in the presence of a proton gradient across the membrane. The gamma chain is believed to be important in regulating ATPase activity and the flow of protons through the CF(0) complex. The chain is ATP synthase gamma chain from Synechococcus sp. (strain JA-3-3Ab) (Cyanobacteria bacterium Yellowstone A-Prime).